A 333-amino-acid polypeptide reads, in one-letter code: Galactinol synthase 5 (333 aa).

Lysine 103 is a catalytic residue. Mn(2+)-binding residues include aspartate 119, aspartate 121, and histidine 257.

Belongs to the glycosyltransferase 8 family. Galactosyltransferase subfamily. A divalent metal cation serves as cofactor.

The protein localises to the cytoplasm. The catalysed reaction is myo-inositol + UDP-alpha-D-galactose = alpha-D-galactosyl-(1-&gt;3)-1D-myo-inositol + UDP + H(+). Galactinol synthase involved in the biosynthesis of raffinose family oligosaccharides (RFOs) that function as osmoprotectants. May promote plant stress tolerance. The protein is Galactinol synthase 5 (GOLS5) of Arabidopsis thaliana (Mouse-ear cress).